We begin with the raw amino-acid sequence, 131 residues long: Phosphoribosyl-AMP cyclohydrolase (131 aa).

A Mg(2+)-binding site is contributed by D74. Position 75 (C75) interacts with Zn(2+). Positions 76 and 78 each coordinate Mg(2+). Zn(2+) contacts are provided by C91 and C98.

It belongs to the PRA-CH family. In terms of assembly, homodimer. Requires Mg(2+) as cofactor. It depends on Zn(2+) as a cofactor.

The protein resides in the cytoplasm. The catalysed reaction is 1-(5-phospho-beta-D-ribosyl)-5'-AMP + H2O = 1-(5-phospho-beta-D-ribosyl)-5-[(5-phospho-beta-D-ribosylamino)methylideneamino]imidazole-4-carboxamide. Its pathway is amino-acid biosynthesis; L-histidine biosynthesis; L-histidine from 5-phospho-alpha-D-ribose 1-diphosphate: step 3/9. In terms of biological role, catalyzes the hydrolysis of the adenine ring of phosphoribosyl-AMP. The polypeptide is Phosphoribosyl-AMP cyclohydrolase (Bradyrhizobium sp. (strain BTAi1 / ATCC BAA-1182)).